We begin with the raw amino-acid sequence, 137 residues long: Small ribosomal subunit protein uS12 (137 aa).

Disordered regions lie at residues 1 to 21 and 34 to 57; these read MPTINQLVRKPRKSKVEKSDS and VHTKLAAPQKRGVATRVGTMTPKK.

This sequence belongs to the universal ribosomal protein uS12 family. As to quaternary structure, part of the 30S ribosomal subunit. Contacts proteins S8 and S17. May interact with IF1 in the 30S initiation complex.

Functionally, with S4 and S5 plays an important role in translational accuracy. Its function is as follows. Interacts with and stabilizes bases of the 16S rRNA that are involved in tRNA selection in the A site and with the mRNA backbone. Located at the interface of the 30S and 50S subunits, it traverses the body of the 30S subunit contacting proteins on the other side and probably holding the rRNA structure together. The combined cluster of proteins S8, S12 and S17 appears to hold together the shoulder and platform of the 30S subunit. The sequence is that of Small ribosomal subunit protein uS12 from Streptococcus mutans serotype c (strain ATCC 700610 / UA159).